The sequence spans 491 residues: Cytochrome P450 2F2 (491 aa).

C436 lines the heme pocket.

Belongs to the cytochrome P450 family. Heme is required as a cofactor.

It is found in the endoplasmic reticulum membrane. It localises to the microsome membrane. In terms of biological role, involved in the regio- and stereoselective transformation of naphthalene to trans-1R-hydroxy-2R-glutathionyl-1,2-dihydronaphthalene in the presence of glutathione and glutathione S-transferases. It specifically catalyzes the production of a very reactive and potentially toxic intermediate, the 2R,2S arene oxide, that is associated with necrosis of the unciliated bronchiolar epithelial cells or club cells in lung. The sequence is that of Cytochrome P450 2F2 (Cyp2f2) from Rattus norvegicus (Rat).